Here is a 40-residue protein sequence, read N- to C-terminus: Dolichyl-diphosphooligosaccharide--protein glycosyltransferase subunit 4 (40 aa).

The Lumenal portion of the chain corresponds to methionine 1–aspartate 4. Residues valine 5–tyrosine 25 form a helical membrane-spanning segment. Topologically, residues histidine 26–lysine 40 are cytoplasmic.

Belongs to the OST4 family. Component of the oligosaccharyltransferase (OST) complex.

It localises to the endoplasmic reticulum membrane. Its function is as follows. Subunit of the oligosaccharyl transferase (OST) complex that catalyzes the initial transfer of a defined glycan (Glc(3)Man(9)GlcNAc(2) in eukaryotes) from the lipid carrier dolichol-pyrophosphate to an asparagine residue within an Asn-X-Ser/Thr consensus motif in nascent polypeptide chains, the first step in protein N-glycosylation. N-glycosylation occurs cotranslationally and the complex associates with the Sec61 complex at the channel-forming translocon complex that mediates protein translocation across the endoplasmic reticulum (ER). All subunits are required for a maximal enzyme activity. The chain is Dolichyl-diphosphooligosaccharide--protein glycosyltransferase subunit 4 from Drosophila erecta (Fruit fly).